Consider the following 351-residue polypeptide: Transaldolase (351 aa).

K138 functions as the Schiff-base intermediate with substrate in the catalytic mechanism.

This sequence belongs to the transaldolase family. Type 2 subfamily.

It is found in the cytoplasm. It carries out the reaction D-sedoheptulose 7-phosphate + D-glyceraldehyde 3-phosphate = D-erythrose 4-phosphate + beta-D-fructose 6-phosphate. Its pathway is carbohydrate degradation; pentose phosphate pathway; D-glyceraldehyde 3-phosphate and beta-D-fructose 6-phosphate from D-ribose 5-phosphate and D-xylulose 5-phosphate (non-oxidative stage): step 2/3. Functionally, transaldolase is important for the balance of metabolites in the pentose-phosphate pathway. The polypeptide is Transaldolase (Neisseria meningitidis serogroup C / serotype 2a (strain ATCC 700532 / DSM 15464 / FAM18)).